Consider the following 122-residue polypeptide: Large ribosomal subunit protein uL14 (122 aa).

This sequence belongs to the universal ribosomal protein uL14 family. In terms of assembly, part of the 50S ribosomal subunit. Forms a cluster with proteins L3 and L19. In the 70S ribosome, L14 and L19 interact and together make contacts with the 16S rRNA in bridges B5 and B8.

Functionally, binds to 23S rRNA. Forms part of two intersubunit bridges in the 70S ribosome. The polypeptide is Large ribosomal subunit protein uL14 (Buchnera aphidicola subsp. Schizaphis graminum (strain Sg)).